We begin with the raw amino-acid sequence, 325 residues long: Forkhead box protein B1 (325 aa).

The segment at residues 12–103 is a DNA-binding region (fork-head); that stretch reads QKPPYSYISL…GDMFENGSFL (92 aa). Residues 284-309 are compositionally biased toward low complexity; sequence LSNSPPSLSPTSSQTATSQSSPATPS. The disordered stretch occupies residues 284-325; it reads LSNSPPSLSPTSSQTATSQSSPATPSETLTSPASALHSVAVH.

Expressed widespread in the early developing ventricular zone of the neural tube and later restricted to areas of the spinal cord, hindbrain, thalamus and hypothalamus. Expressed in epithelial cells of developing and adult mammary glands.

The protein localises to the nucleus. Its function is as follows. Transcription factor expressed by neural progenitor cells in specific regions of the embryonic neuroepithelium. Essential for the mammillary nuclei maintenance. Negatively regulates the proliferation of oligodendrocyte progenitors and promotes oligodendrocyte maturation. Also expressed in mammary glands, plays a role in lactation, controls development of mammary glands and the inferior colliculi of the midbrain in the central nervous system that regulates the milk-ejection reflex. This Mus musculus (Mouse) protein is Forkhead box protein B1 (Foxb1).